We begin with the raw amino-acid sequence, 420 residues long: POU domain, class 4, transcription factor 1 (420 aa).

A POU-IV box motif is present at residues 57–66; that stretch reads RAEALAAVDI. Disordered regions lie at residues 94–117 and 132–200; these read STVP…GDLL and GGAG…XGHL. The segment covering 99–108 has biased composition (basic residues); that stretch reads AHHHHHHHHH. Gly residues-rich tracts occupy residues 132 to 165 and 172 to 184; these read GGAG…GPGV and PGGG…GGLL. The POU-specific domain occupies 261 to 338; the sequence is DSDTDPRELE…ILQAWLEEAE (78 aa). Positions 356–415 form a DNA-binding region, homeobox; that stretch reads KKRKRTSIAAPEKRSLEAYFAVQPRPSSEKIAAIAEKLDLKKNVVRVWFCNQRQKQKRMK.

The protein belongs to the POU transcription factor family. Class-4 subfamily. In terms of assembly, interacts (via N-terminus) with RIT2; the interaction controls POU4F1 transactivation activity on some neuronal target genes. Isoform 1 interacts with POU4F2; this interaction inhibits both POU4F1 DNA-binding and transcriptional activities. Isoform 1 interacts (C-terminus) with ESR1 (via DNA-binding domain); this interaction decreases the estrogen receptor ESR1 transcriptional activity in a DNA- and ligand 17-beta-estradiol-independent manner. As to expression, detected in brain, spinal cord and dorsal root ganglion. Isoform 2 is detected in brain, spinal cord, dorsal root ganglion and spleen.

The protein resides in the nucleus. Its subcellular location is the cytoplasm. Its function is as follows. Multifunctional transcription factor with different regions mediating its different effects. Acts by binding (via its C-terminal domain) to sequences related to the consensus octamer motif 5'-ATGCAAAT-3' in the regulatory regions of its target genes. Regulates the expression of specific genes involved in differentiation and survival within a subset of neuronal lineages. It has been shown that activation of some of these genes requires its N-terminal domain, maybe through a neuronal-specific cofactor. Activates BCL2 expression and protects neuronal cells from apoptosis (via the N-terminal domain). Induces neuronal process outgrowth and the coordinate expression of genes encoding synaptic proteins. Exerts its major developmental effects in somatosensory neurons and in brainstem nuclei involved in motor control. Stimulates the binding affinity of the nuclear estrogene receptor ESR1 to DNA estrogen response element (ERE), and hence modulates ESR1-induced transcriptional activity. May positively regulate POU4F2 and POU4F3. Regulates dorsal root ganglion sensory neuron specification and axonal projection into the spinal cord. Plays a role in TNFSF11-mediated terminal osteoclast differentiation. Negatively regulates its own expression interacting directly with a highly conserved autoregulatory domain surrounding the transcription initiation site. In terms of biological role, able to act as transcription factor, cannot regulate the expression of the same subset of genes than isoform 1. Does not have anitapoptotic effect on neuronal cells. The chain is POU domain, class 4, transcription factor 1 (Pou4f1) from Rattus norvegicus (Rat).